The primary structure comprises 221 residues: Serine/arginine-rich splicing factor 9 (221 aa).

2 RRM domains span residues 14 to 89 (GRIY…FPRT) and 111 to 187 (FRVL…PERS). A Glycyl lysine isopeptide (Lys-Gly) (interchain with G-Cter in SUMO2) cross-link involves residue K36. An interaction with SAFB1 region spans residues 188 to 200 (TSYGYSRSRSGSR). S189 carries the post-translational modification Phosphoserine. The segment covering 189-198 (SYGYSRSRSG) has biased composition (low complexity). Positions 189–221 (SYGYSRSRSGSRGRDSPYQSRGSPHYFSPFRPY) are disordered. Y192 bears the Phosphotyrosine mark. Phosphoserine occurs at positions 193, 195, 204, 208, and 211. Y214 carries the post-translational modification Phosphotyrosine. S216 is modified (phosphoserine).

It belongs to the splicing factor SR family. As to quaternary structure, interacts with KHDRBS3. Interacts with HABP4. Interacts with NOL3/ARC/NOP30. Interacts with NSEP1/YB-1/YB1. Interacts with SAFB/SAFB1. Interacts with SRSF6/SFRS6. Interacts with TRA2B/SFRS10. Interacts with C1QBP. May also interact with DUSP11/PIR1. In terms of processing, extensively phosphorylated on serine residues in the RS domain. As to expression, expressed at high levels in the heart, kidney, pancreas and placenta, and at lower levels in the brain, liver, lung and skeletal muscle.

Its subcellular location is the nucleus. In terms of biological role, plays a role in constitutive splicing and can modulate the selection of alternative splice sites. Represses the splicing of MAPT/Tau exon 10. The polypeptide is Serine/arginine-rich splicing factor 9 (SRSF9) (Homo sapiens (Human)).